We begin with the raw amino-acid sequence, 1413 residues long: DNA-directed RNA polymerase subunit beta' (1413 aa).

4 residues coordinate Zn(2+): Cys72, Cys74, Cys87, and Cys90. Residues Asp463, Asp465, and Asp467 each coordinate Mg(2+). 4 residues coordinate Zn(2+): Cys811, Cys885, Cys892, and Cys895.

It belongs to the RNA polymerase beta' chain family. In terms of assembly, the RNAP catalytic core consists of 2 alpha, 1 beta, 1 beta' and 1 omega subunit. When a sigma factor is associated with the core the holoenzyme is formed, which can initiate transcription. Requires Mg(2+) as cofactor. The cofactor is Zn(2+).

The enzyme catalyses RNA(n) + a ribonucleoside 5'-triphosphate = RNA(n+1) + diphosphate. Its function is as follows. DNA-dependent RNA polymerase catalyzes the transcription of DNA into RNA using the four ribonucleoside triphosphates as substrates. This is DNA-directed RNA polymerase subunit beta' from Ruegeria pomeroyi (strain ATCC 700808 / DSM 15171 / DSS-3) (Silicibacter pomeroyi).